The primary structure comprises 497 residues: MNGYFRLIAAFALGVATVSGFAPFYLYPIPVVTLALLALLWRRSRTPGQAALTGFTFGMGLFGAGVTWLYVSLHDFGHMEPALAVLALIILCAYLALFPALTGWITAFRHFRASWAWPGMVAALWALAEWLRGTLFTGFPWLTVGYSQAPASPLAGFAPVIGVYGLSLLLMLSAAWLACWLENRQSHRFWLGLGSVWLIGFGLQQIHWTQPEGEPVTVSLLQGNIPQNMKWQPEHLAATMQIYAELVQESPSRLIVTPEISFPLFYEQAPQDYLALLAEHARSRQGDLLIGMAERSSSDNGYYNTMFSFGTSPEQSYRKYHLVPFGEYIPLKPVFGWIIDVLHIPLSDFSRGGLDQQPLDLAGQQVAVNICYEDVFGEEIIMQLPQASLLVNVSNDAWFGRSIGPRQHLQISQMRALETGRYMLRATNTGVTAIIDERGRVLEQLDMFTTAGLHSTAQGFGGATPYVRFGNSLVFALIGLLLLAGSLAAFSGRRKTL.

The next 6 helical transmembrane spans lie at 21 to 41 (FAPF…ALLW), 51 to 71 (ALTG…WLYV), 85 to 105 (VLAL…TGWI), 119 to 139 (GMVA…FTGF), 157 to 177 (FAPV…AAWL), and 189 to 209 (FWLG…IHWT). Residues 221–461 (LQGNIPQNMK…GLHSTAQGFG (241 aa)) enclose the CN hydrolase domain. Glu-259 acts as the Proton acceptor in catalysis. Lys-319 is a catalytic residue. Cys-371 acts as the Nucleophile in catalysis. Residues 472 to 492 (SLVFALIGLLLLAGSLAAFSG) traverse the membrane as a helical segment.

Belongs to the CN hydrolase family. Apolipoprotein N-acyltransferase subfamily.

The protein localises to the cell inner membrane. The enzyme catalyses N-terminal S-1,2-diacyl-sn-glyceryl-L-cysteinyl-[lipoprotein] + a glycerophospholipid = N-acyl-S-1,2-diacyl-sn-glyceryl-L-cysteinyl-[lipoprotein] + a 2-acyl-sn-glycero-3-phospholipid + H(+). The protein operates within protein modification; lipoprotein biosynthesis (N-acyl transfer). Functionally, catalyzes the phospholipid dependent N-acylation of the N-terminal cysteine of apolipoprotein, the last step in lipoprotein maturation. This Nitrosomonas europaea (strain ATCC 19718 / CIP 103999 / KCTC 2705 / NBRC 14298) protein is Apolipoprotein N-acyltransferase.